Consider the following 331-residue polypeptide: Peroxidase 60 (331 aa).

The first 26 residues, 1 to 26 (MAVKISTIEVLILSLALLSFGHGCYG), serve as a signal peptide directing secretion. 4 disulfides stabilise this stretch: Cys37/Cys113, Cys70/Cys75, Cys119/Cys321, and Cys198/Cys230. His68 functions as the Proton acceptor in the catalytic mechanism. Positions 69, 74, 76, and 78 each coordinate Ca(2+). Pro161 serves as a coordination point for substrate. A heme b-binding site is contributed by His191. Residue Thr192 participates in Ca(2+) binding. Asn245 is a glycosylation site (N-linked (GlcNAc...) asparagine). The Ca(2+) site is built by Ser248 and Asp253.

Belongs to the peroxidase family. Classical plant (class III) peroxidase subfamily. Heme b serves as cofactor. Requires Ca(2+) as cofactor. Expressed in roots, slightly in leaves.

The protein resides in the secreted. It catalyses the reaction 2 a phenolic donor + H2O2 = 2 a phenolic radical donor + 2 H2O. Removal of H(2)O(2), oxidation of toxic reductants, biosynthesis and degradation of lignin, suberization, auxin catabolism, response to environmental stresses such as wounding, pathogen attack and oxidative stress. These functions might be dependent on each isozyme/isoform in each plant tissue. This chain is Peroxidase 60 (PER60), found in Arabidopsis thaliana (Mouse-ear cress).